A 516-amino-acid chain; its full sequence is Cytochrome P450 93G1 (516 aa).

The chain crosses the membrane as a helical span at residues 11-31 (LLGMGTTMGALALALVVVVVV). Position 454 (C454) interacts with heme.

Belongs to the cytochrome P450 family. It depends on heme as a cofactor.

It is found in the membrane. The enzyme catalyses a flavanone + reduced [NADPH--hemoprotein reductase] + O2 = a flavone + oxidized [NADPH--hemoprotein reductase] + 2 H2O + H(+). It participates in secondary metabolite biosynthesis; flavonoid biosynthesis. Its function is as follows. Functions as a flavone synthase II (FNSII) that catalyzes the direct conversion of flavanones to flavones. In vitro, can convert naringenin and eriodictyol to apigenin and luteolin, respectively. Acts as a key branch point enzyme that channels flavanones to the biosynthesis of soluble tricin O-linked conjugates. The polypeptide is Cytochrome P450 93G1 (Oryza sativa subsp. japonica (Rice)).